The following is a 264-amino-acid chain: Regulator of cytoskeleton and endocytosis RVS161 (264 aa).

Residues 15 to 239 enclose the BAR domain; that stretch reads ASVIVKDVDK…LDPASRDEYA (225 aa).

It localises to the cytoplasm. The protein resides in the cytoskeleton. Its function is as follows. Component of a cytoskeletal structure that is required for the formation of endocytic vesicles at the plasma membrane level. Plays an important role in virulence. The sequence is that of Regulator of cytoskeleton and endocytosis RVS161 (RVS161) from Candida albicans (strain SC5314 / ATCC MYA-2876) (Yeast).